Consider the following 525-residue polypeptide: MTKNIHKHRILILDFGSQYTQLLARRVREIGVYCELWAWDVTEAQIREFNPSGIILSGSPESTIENGSPRAPDYVFTAGVPVLGVCYGMQTMAIQLGGKVESSNQREFGYAQVEIKADSALIRDIKDAINPAGEAVLDVWMSHGDKVAEIPADFVTVASTDTCPFAIMANEEKRFYGVQFHPEVTHTKQGLRLLERFVLGICGCEALWTSATIIEDAIVRLREQIGDDHVILGLSGGVDSSVTAMLLHRAIGKRLTCVFVDNGLLRLNEADQVLEMFGDKFGLNIVHVAAEDRFLSALTGVDEPEAKRKIIGRVFVELFDEEACKQEQVKWLAQGTIYPDVIESAASATGKAHVIKSHHNVGGLPKEMKLGLVEPLKELFKDEVRKIGLELGLPYDMLYRHPFPGPGLGVRVLGEVKKEYCDLLRRADAIFIEELHKADLYNKVSQAFTVFLPVRSVGVMGDGRKYDWVVSLRAVETVDFMTAHWAHLPYDFLGRVSNRIINEVNGISRVVYDISGKPPATIEWE.

Residues 9–207 (RILILDFGSQ…VLGICGCEAL (199 aa)) enclose the Glutamine amidotransferase type-1 domain. Residue Cys86 is the Nucleophile of the active site. Residues His181 and Glu183 contribute to the active site. The 193-residue stretch at 208 to 400 (WTSATIIEDA…LGLPYDMLYR (193 aa)) folds into the GMPS ATP-PPase domain. 235 to 241 (SGGVDSS) contributes to the ATP binding site.

In terms of assembly, homodimer.

It catalyses the reaction XMP + L-glutamine + ATP + H2O = GMP + L-glutamate + AMP + diphosphate + 2 H(+). Its pathway is purine metabolism; GMP biosynthesis; GMP from XMP (L-Gln route): step 1/1. Its function is as follows. Catalyzes the synthesis of GMP from XMP. This chain is GMP synthase [glutamine-hydrolyzing], found in Yersinia pestis bv. Antiqua (strain Antiqua).